The sequence spans 216 residues: GTP-binding nuclear protein spi1 (216 aa).

The 165-residue stretch at 6-170 (NVPTFKLVLV…LWLARKLVGN (165 aa)) folds into the Small GTPase Ran-type domain. 17 to 24 (DGGTGKTT) is a GTP binding site. Thr-20 carries the post-translational modification Phosphothreonine. The interval 36–44 (KKYIATLGV) is switch-I. GTP contacts are provided by residues Gly-67, 121–124 (NKVD), and 149–151 (SAK). The switch-II stretch occupies residues 67-83 (GQEKLGGLRDGYYIQGQ).

This sequence belongs to the small GTPase superfamily. Ran family. Oligomer of dis3, pim1 and spi1. Found in a nuclear export complex with RanGTP, exportin and pre-miRNA. Interacts with fft3.

It is found in the nucleus. Its function is as follows. GTP-binding protein involved in nucleocytoplasmic transport. Required for the import of protein into the nucleus and also for RNA export. The protein is GTP-binding nuclear protein spi1 (spi1) of Schizosaccharomyces pombe (strain 972 / ATCC 24843) (Fission yeast).